The following is a 532-amino-acid chain: Germ cell nuclear acidic-1 protein (532 aa).

Residues 1–10 (MPTPFRDLHN) are compositionally biased toward basic and acidic residues. Disordered stretches follow at residues 1–50 (MPTP…EPIS), 84–181 (REAP…GNFE), and 213–253 (YISE…DRKQ). Residues 14–32 (ASASSYETAWSSSFSSRRS) show a composition bias toward low complexity. Composition is skewed to basic and acidic residues over residues 39–48 (SNLKEIKDEP), 94–107 (LLQK…RDML), and 124–133 (KPKEVKKALK). The segment covering 213-235 (YISEESSEEESEEEEEDVDDEEY) has biased composition (acidic residues). Over residues 236 to 251 (RESSPEVEAKISYSDR) the composition is skewed to basic and acidic residues. The region spanning 308-398 (RRIFSAIPSE…GARCSSVFKS (91 aa)) is the SprT-like domain. The segment at 468–489 (AKPVGPILSNSSKPSPPAPRRI) is disordered.

The protein belongs to the serine-aspartate repeat-containing protein (SDr) family. As to quaternary structure, interacts with top-2; this interaction allows the resolution of topoisomerase II (top-2) DNA-protein cross-links. Mainly expressed in germ cells and early embryonic, proliferating cells.

The protein resides in the chromosome. Functionally, may play a role in DNA-protein cross-links (DPCs) clearance through a SUMO-dependent recruitment to sites of DPCs, ensuring the genomic stability by protecting germ cells and early embryos from various sources of damage. May resolve the topoisomerase II (top-2) DPCs. Limits replication stress and DNA double-strand breaks. The protein is Germ cell nuclear acidic-1 protein of Caenorhabditis elegans.